Here is a 447-residue protein sequence, read N- to C-terminus: UDP-glycosyltransferase 76E5 (447 aa).

UDP-alpha-D-glucose-binding positions include S272, 324 to 326 (APQ), 341 to 349 (HCGWNSTLE), and 363 to 366 (NGEQ).

Belongs to the UDP-glycosyltransferase family.

The chain is UDP-glycosyltransferase 76E5 (UGT76E5) from Arabidopsis thaliana (Mouse-ear cress).